We begin with the raw amino-acid sequence, 984 residues long: Putative formate dehydrogenase SAB2186c (984 aa).

One can recognise a 2Fe-2S ferredoxin-type domain in the interval 3–79 (EHLVVTLDGK…PMTVNTVNND (77 aa)). [2Fe-2S] cluster contacts are provided by cysteine 37, cysteine 48, cysteine 51, and cysteine 63. In terms of domain architecture, 4Fe-4S His(Cys)3-ligated-type spans 79–119 (DVKDAQKEALDRILEKHMLYCTVCDYNNGDCEIHNTMDAWG). The [4Fe-4S] cluster site is built by histidine 95, cysteine 99, cysteine 102, cysteine 109, cysteine 147, cysteine 150, cysteine 153, cysteine 157, cysteine 190, cysteine 193, cysteine 196, cysteine 200, cysteine 264, cysteine 267, cysteine 271, and cysteine 299. 4Fe-4S ferredoxin-type domains follow at residues 138 to 165 (PFYRYDPNQCILCGRCVEACQDIEVNET) and 181 to 211 (NDVPINESSCVSCGQCATVCPCNAMMEVNME). The formate dehydrogenase stretch occupies residues 252 to 984 (MRKERIKKTK…YVFPGNQVDK (733 aa)). Positions 257–313 (IKKTKTVCTYCGVGCSFEVWTKDREILKVQPSHDSPANKIATCVKGKFSWGHINSDQ) constitute a 4Fe-4S Mo/W bis-MGD-type domain.

It in the C-terminal section; belongs to the prokaryotic molybdopterin-containing oxidoreductase family. The cofactor is [2Fe-2S] cluster. [4Fe-4S] cluster serves as cofactor. It depends on Mo-bis(molybdopterin guanine dinucleotide) as a cofactor.

It carries out the reaction formate + NAD(+) = CO2 + NADH. The chain is Putative formate dehydrogenase SAB2186c from Staphylococcus aureus (strain bovine RF122 / ET3-1).